Reading from the N-terminus, the 316-residue chain is Probable cell division protein WhiA (316 aa).

A DNA-binding region (H-T-H motif) is located at residues 280–313; that stretch reads SLKELGEMLEPPVGKSGVNHRLRKIEKIAEELRT.

It belongs to the WhiA family.

In terms of biological role, involved in cell division and chromosome segregation. The protein is Probable cell division protein WhiA of Clostridium perfringens (strain 13 / Type A).